The chain runs to 1511 residues: Bifunctional glutamate/proline--tRNA ligase (1511 aa).

The glutamate--tRNA ligase stretch occupies residues 164-758 (GTKWDVSENK…SSVLYNRVAA (595 aa)). Positions 204–214 (PEASGYLHIGH) match the 'HIGH' region motif. The segment at 296 to 315 (AEQMKAEREQRAESKHRQNS) is disordered. The segment covering 299–315 (MKAEREQRAESKHRQNS) has biased composition (basic and acidic residues). Lys-300 carries the post-translational modification N6-acetyllysine; alternate. An N6-malonyllysine; alternate modification is found at Lys-300. Thr-355 carries the phosphothreonine modification. Lys-417 carries the N6-acetyllysine modification. The short motif at 432 to 436 (VLSKR) is the 'KMSKS' region element. Ser-434 is subject to Phosphoserine. N6-acetyllysine occurs at positions 498, 535, 542, and 637. The span at 708 to 728 (KEMPTSGSKEKTKAEPLKKET) shows a compositional bias: basic and acidic residues. The segment at 708-741 (KEMPTSGSKEKTKAEPLKKETSSAPKEGPVPAVS) is disordered. Ser-746 is subject to Phosphoserine. The WHEP-TRS 1 domain occupies 748–804 (ESSVLYNRVAAQGDVVRELKAKKAAKEDVDAAVKQLLALKAEYKQKTGQEYKPGNPP). The tract at residues 759 to 955 (QGDVVRELKA…GIEYKPVSAT (197 aa)) is 3 X 57 AA approximate repeats. Position 787 is an N6-acetyllysine (Lys-787). Positions 794–823 (TGQEYKPGNPPSAAAQSASTKSLPSAGEDR) are disordered. Over residues 807-816 (AAQSASTKSL) the composition is skewed to polar residues. Positions 821 to 877 (EDRSLYDKIAAQGEVVRKLKAEKAPKAKVTEAVECLLSLKAEYKEKTGKEYVPGQPP) constitute a WHEP-TRS 2 domain. At Lys-860 the chain carries N6-acetyllysine. 2 disordered regions span residues 868–903 (GKEYVPGQPPASQKSQPSPASKAEPAGPETTEAKAL) and 952–1015 (VSAT…RLGL). The residue at position 871 (Tyr-871) is a Phosphotyrosine. Residues 877–890 (PASQKSQPSPASKA) are compositionally biased toward low complexity. Ser-885 is subject to Phosphoserine; by CDK5. A Phosphothreonine modification is found at Thr-897. The region spanning 899–955 (EAKALFDRVACQGEVVRKLKAEKASKDQVDPAVQELLQLKAQYKSLTGIEYKPVSAT) is the WHEP-TRS 3 domain. Positions 957-975 (SEDKDKKKKEKENKSEKQN) are enriched in basic and acidic residues. The segment covering 992–1005 (QGGGLSSSGAGEGQ) has biased composition (gly residues). Ser-997 bears the Phosphoserine mark. Ser-998 is subject to Phosphoserine; by RPS6KB1. Position 999 is a phosphoserine (Ser-999). The proline--tRNA ligase stretch occupies residues 1006–1511 (GPKKQTRLGL…KFYTLFGRSY (506 aa)). L-proline is bound by residues 1120 to 1122 (TSE) and Arg-1151. ATP-binding residues include Arg-1151, Glu-1153, Arg-1162, Thr-1163, Gln-1236, and Thr-1239. An Omega-N-methylarginine modification is found at Arg-1151. Gln-1236 is a binding site for Mg(2+). L-proline is bound at residue His-1241. The ATP site is built by Thr-1275 and Arg-1277. At Ser-1349 the chain carries Phosphoserine. Zn(2+)-binding residues include Cys-1447, Cys-1452, Cys-1494, and Cys-1496. Lys-1502 is subject to N6-acetyllysine.

It in the N-terminal section; belongs to the class-I aminoacyl-tRNA synthetase family. Glutamate--tRNA ligase type 2 subfamily. The protein in the C-terminal section; belongs to the class-II aminoacyl-tRNA synthetase family. Homodimer. Part of the aminoacyl-tRNA synthetase multienzyme complex, also know as multisynthetase complex, that is composed of the tRNA ligases for Arg (RARS1), Asp (DARS1), Gln (QARS1), Ile (IARS1), Leu (LARS1), Lys (KARS1), Met (MARS1) the bifunctional ligase for Glu and Pro (EPRS1) and the auxiliary subunits AIMP1/p43, AIMP2/p38 and EEF1E1/p18. Forms a linear complex that contains MARS1, EEF1E1, EPRS1 and AIMP2 that is at the core of the multisubunit complex. Interacts with TARS3. Interacts with DUS2L. Component of the GAIT complex which is composed of EPRS1, RPL13A and GAPDH. Interacts (phosphorylated at Ser-998) with SLC27A1; mediates the translocation of SLC27A1 from the cytoplasm to the plasma membrane thereby increasing the uptake of long-chain fatty acids. Post-translationally, phosphorylated at Ser-998 by RPS6KB1; triggers EPRS1 release from the aminoacyl-tRNA synthetase multienzyme complex. In monocytes, the IFN-gamma-induced phosphorylation at Ser-998 releases EPRS1 from the aminoacyl-tRNA synthetase multienzyme complex, allowing its association with the GAIT complex. Phosphorylation at Ser-998 is specifically required for the RPL13A-mediated interaction of the GAIT complex with eIF4G. Phosphorylation at Ser-998 by RPS6KB1, is also induced by insulin through activation of the mTORC1 signaling pathway and promotes the interaction of EPRS1 with SLC27A1.

It is found in the cytoplasm. Its subcellular location is the cytosol. The protein localises to the membrane. It catalyses the reaction tRNA(Glu) + L-glutamate + ATP = L-glutamyl-tRNA(Glu) + AMP + diphosphate. It carries out the reaction tRNA(Pro) + L-proline + ATP = L-prolyl-tRNA(Pro) + AMP + diphosphate. In terms of biological role, multifunctional protein which primarily functions within the aminoacyl-tRNA synthetase multienzyme complex, also known as multisynthetase complex. Within the complex it catalyzes the attachment of both L-glutamate and L-proline to their cognate tRNAs in a two-step reaction where the amino acid is first activated by ATP to form a covalent intermediate with AMP. Subsequently, the activated amino acid is transferred to the acceptor end of the cognate tRNA to form L-glutamyl-tRNA(Glu) and L-prolyl-tRNA(Pro). Upon interferon-gamma stimulation, EPRS1 undergoes phosphorylation, causing its dissociation from the aminoacyl-tRNA synthetase multienzyme complex. It is recruited to form the GAIT complex, which binds to stem loop-containing GAIT elements found in the 3'-UTR of various inflammatory mRNAs, such as ceruloplasmin. The GAIT complex inhibits the translation of these mRNAs, allowing interferon-gamma to redirect the function of EPRS1 from protein synthesis to translation inhibition in specific cell contexts. Furthermore, it can function as a downstream effector in the mTORC1 signaling pathway, by promoting the translocation of SLC27A1 from the cytoplasm to the plasma membrane where it mediates the uptake of long-chain fatty acid by adipocytes. Thereby, EPRS1 also plays a role in fat metabolism and more indirectly influences lifespan. This Cricetulus griseus (Chinese hamster) protein is Bifunctional glutamate/proline--tRNA ligase.